The chain runs to 275 residues: Tryptophan synthase alpha chain (275 aa).

Catalysis depends on proton acceptor residues Glu51 and Asp62.

Belongs to the TrpA family. As to quaternary structure, tetramer of two alpha and two beta chains.

It carries out the reaction (1S,2R)-1-C-(indol-3-yl)glycerol 3-phosphate + L-serine = D-glyceraldehyde 3-phosphate + L-tryptophan + H2O. It participates in amino-acid biosynthesis; L-tryptophan biosynthesis; L-tryptophan from chorismate: step 5/5. The alpha subunit is responsible for the aldol cleavage of indoleglycerol phosphate to indole and glyceraldehyde 3-phosphate. The sequence is that of Tryptophan synthase alpha chain from Methanopyrus kandleri (strain AV19 / DSM 6324 / JCM 9639 / NBRC 100938).